A 101-amino-acid chain; its full sequence is Small ribosomal subunit protein eS24 (101 aa).

The protein belongs to the eukaryotic ribosomal protein eS24 family.

In Methanocaldococcus jannaschii (strain ATCC 43067 / DSM 2661 / JAL-1 / JCM 10045 / NBRC 100440) (Methanococcus jannaschii), this protein is Small ribosomal subunit protein eS24.